Consider the following 262-residue polypeptide: Phosphonates import ATP-binding protein PhnC (262 aa).

The region spanning 5–253 (IRVEKLAKTF…RFDHLYRSIN (249 aa)) is the ABC transporter domain. 37–44 (GPSGSGKS) lines the ATP pocket.

Belongs to the ABC transporter superfamily. Phosphonates importer (TC 3.A.1.9.1) family. As to quaternary structure, the complex is composed of two ATP-binding proteins (PhnC), two transmembrane proteins (PhnE) and a solute-binding protein (PhnD).

The protein localises to the cell inner membrane. It carries out the reaction phosphonate(out) + ATP + H2O = phosphonate(in) + ADP + phosphate + H(+). In terms of biological role, part of the ABC transporter complex PhnCDE involved in phosphonates import. Responsible for energy coupling to the transport system. This Escherichia coli O6:K15:H31 (strain 536 / UPEC) protein is Phosphonates import ATP-binding protein PhnC.